The following is a 419-amino-acid chain: Carboxypeptidase A1 (419 aa).

The N-terminal stretch at 1 to 16 (MKRLLILSLLLEAVCG) is a signal peptide. Residues 17-110 (NENFVGHQVL…KQQMSAFQAR (94 aa)) constitute a propeptide, activation peptide. The Peptidase M14 domain occupies 121-414 (TYHTLDEIYE…LALLTIMDHT (294 aa)). Zn(2+) is bound by residues H179 and E182. Residues 179-182 (HSRE), R237, and 254-255 (NR) each bind substrate. C248 and C271 form a disulfide bridge. A Zn(2+)-binding site is contributed by H306. Residues 307–308 (SY) and Y358 each bind substrate. The Proton donor/acceptor role is filled by E380.

This sequence belongs to the peptidase M14 family. As to quaternary structure, monomer. May form a complex with proelastase 2. Zn(2+) is required as a cofactor.

It is found in the secreted. The catalysed reaction is Release of a C-terminal amino acid, but little or no action with -Asp, -Glu, -Arg, -Lys or -Pro.. It catalyses the reaction leukotriene C4 + H2O = leukotriene F4 + glycine. Functionally, carboxypeptidase that catalyzes the release of a C-terminal amino acid, but has little or no action with -Asp, -Glu, -Arg, -Lys or -Pro. Catalyzes the conversion of leukotriene C4 to leukotriene F4 via the hydrolysis of an amide bond. This is Carboxypeptidase A1 from Rattus norvegicus (Rat).